The chain runs to 325 residues: MAASCVLLHTGQKMPLIGLGTWKSEPGQVKAAIKYALTVGYRHIDCAAIYGNELEIGEALQETVGPGKAVPREELFVTSKLWNTKHHPEDVEPALRKTLADLQLEYLDLYLMHWPYAFERGDNPFPKNADGTIRYDATHYKDTWKALEALVAKGLVRALGLSNFSSRQIDDVLSVASVRPAVLQVECHPYLAQNELIAHCQARGLEVTAYSPLGSSDRAWRDPNEPVLLEEPVVQALAEKYNRSPAQILLRWQVQRKVICIPKSVTPSRILQNIQVFDFTFSPEEMKQLDALNKNLRFIVPMLTVDGKRVPRDAGHPLYPFNDPY.

Ala2 bears the N-acetylalanine mark. Position 4 is a phosphoserine (Ser4). Residues 11–20, Thr21, Trp22, and Asp45 each bind NADP(+); that span reads GQKMPLIGLG. Tyr50 (proton donor) is an active-site residue. An N6-acetyllysine; alternate modification is found at Lys127. The residue at position 127 (Lys127) is an N6-succinyllysine; alternate. Lys145 carries the N6-succinyllysine modification. 13 residues coordinate NADP(+): Ser162, Asn163, Ser211, Leu213, Ser215, Ser216, Lys263, Ser264, Val265, Thr266, Arg269, Gln272, and Asn273. Ser211 bears the Phosphoserine mark.

The protein belongs to the aldo/keto reductase family. In terms of assembly, monomer.

The protein localises to the cytoplasm. It localises to the cytosol. Its subcellular location is the apical cell membrane. It catalyses the reaction a primary alcohol + NADP(+) = an aldehyde + NADPH + H(+). The enzyme catalyses glycerol + NADP(+) = D-glyceraldehyde + NADPH + H(+). The catalysed reaction is glycerol + NADP(+) = L-glyceraldehyde + NADPH + H(+). It carries out the reaction L-gulonate + NADP(+) = aldehydo-D-glucuronate + NADPH + H(+). It catalyses the reaction L-gulono-1,4-lactone + NADP(+) = D-glucurono-3,6-lactone + NADPH + H(+). The enzyme catalyses allyl alcohol + NADP(+) = acrolein + NADPH + H(+). The catalysed reaction is hydroxyacetone + NADP(+) = methylglyoxal + NADPH + H(+). It carries out the reaction 3-deoxyfructose + NADP(+) = 3-deoxyglucosone + NADPH + H(+). It catalyses the reaction (R)-mevalonate + NADP(+) = (R)-mevaldate + NADPH + H(+). The enzyme catalyses pyridine 3-methanol + NADP(+) = pyridine-3-carbaldehyde + NADPH + H(+). The catalysed reaction is S-nitroso-CoA + NADPH + H(+) = sulfinamide-CoA + NADP(+). It carries out the reaction S-nitrosoglutathione + NADPH + H(+) = S-(hydroxysulfenamide)glutathione + NADP(+). Catalyzes the NADPH-dependent reduction of a wide variety of carbonyl-containing compounds to their corresponding alcohols. Displays enzymatic activity towards endogenous metabolites such as aromatic and aliphatic aldehydes, ketones, monosaccharides and bile acids, with a preference for negatively charged substrates, such as glucuronate and succinic semialdehyde. Plays an important role in ascorbic acid biosynthesis by catalyzing the reduction of D-glucuronic acid and D-glucurono-gamma-lactone. Functions as a detoxifiying enzyme by reducing a range of toxic aldehydes. Reduces methylglyoxal and 3-deoxyglucosone, which are present at elevated levels under hyperglycemic conditions and are cytotoxic. Involved also in the detoxification of lipid-derived aldehydes like acrolein. Plays a role in the activation of procarcinogens, such as polycyclic aromatic hydrocarbon trans-dihydrodiols, and in the metabolism of various xenobiotics and drugs. Also acts as an inhibitor of protein S-nitrosylation by mediating degradation of S-nitroso-coenzyme A (S-nitroso-CoA), a cofactor required to S-nitrosylate proteins. S-nitroso-CoA reductase activity is involved in reprogramming intermediary metabolism in renal proximal tubules, notably by inhibiting protein S-nitrosylation of isoform 2 of PKM (PKM2). Also acts as a S-nitroso-glutathione reductase by catalyzing the NADPH-dependent reduction of S-nitrosoglutathione. Displays no reductase activity towards retinoids. This Sus scrofa (Pig) protein is Aldo-keto reductase family 1 member A1 (AKR1A1).